Here is a 178-residue protein sequence, read N- to C-terminus: Bifunctional protein PyrR (178 aa).

The PRPP-binding motif lies at 97 to 109 (VVLVDDVLYTGRT).

Belongs to the purine/pyrimidine phosphoribosyltransferase family. PyrR subfamily.

It catalyses the reaction UMP + diphosphate = 5-phospho-alpha-D-ribose 1-diphosphate + uracil. Functionally, regulates the transcription of the pyrimidine nucleotide (pyr) operon in response to exogenous pyrimidines. Also displays a weak uracil phosphoribosyltransferase activity which is not physiologically significant. This chain is Bifunctional protein PyrR, found in Herpetosiphon aurantiacus (strain ATCC 23779 / DSM 785 / 114-95).